A 423-amino-acid chain; its full sequence is UDP-N-acetylglucosamine 1-carboxyvinyltransferase (423 aa).

Residue 22-23 (KN) coordinates phosphoenolpyruvate. Arg93 serves as a coordination point for UDP-N-acetyl-alpha-D-glucosamine. The Proton donor role is filled by Cys117. Cys117 carries the 2-(S-cysteinyl)pyruvic acid O-phosphothioketal modification. UDP-N-acetyl-alpha-D-glucosamine is bound by residues 122–126 (RPVDL), Asp308, and Val330.

Belongs to the EPSP synthase family. MurA subfamily.

The protein localises to the cytoplasm. The enzyme catalyses phosphoenolpyruvate + UDP-N-acetyl-alpha-D-glucosamine = UDP-N-acetyl-3-O-(1-carboxyvinyl)-alpha-D-glucosamine + phosphate. The protein operates within cell wall biogenesis; peptidoglycan biosynthesis. In terms of biological role, cell wall formation. Adds enolpyruvyl to UDP-N-acetylglucosamine. The polypeptide is UDP-N-acetylglucosamine 1-carboxyvinyltransferase (Finegoldia magna (strain ATCC 29328 / DSM 20472 / WAL 2508) (Peptostreptococcus magnus)).